The sequence spans 407 residues: Phosphopentomutase (407 aa).

Aspartate 10, aspartate 306, histidine 311, aspartate 347, histidine 348, and histidine 359 together coordinate Mn(2+).

It belongs to the phosphopentomutase family. Mn(2+) serves as cofactor.

It is found in the cytoplasm. It catalyses the reaction 2-deoxy-alpha-D-ribose 1-phosphate = 2-deoxy-D-ribose 5-phosphate. The catalysed reaction is alpha-D-ribose 1-phosphate = D-ribose 5-phosphate. The protein operates within carbohydrate degradation; 2-deoxy-D-ribose 1-phosphate degradation; D-glyceraldehyde 3-phosphate and acetaldehyde from 2-deoxy-alpha-D-ribose 1-phosphate: step 1/2. In terms of biological role, isomerase that catalyzes the conversion of deoxy-ribose 1-phosphate (dRib-1-P) and ribose 1-phosphate (Rib-1-P) to deoxy-ribose 5-phosphate (dRib-5-P) and ribose 5-phosphate (Rib-5-P), respectively. The chain is Phosphopentomutase from Salmonella paratyphi A (strain AKU_12601).